Reading from the N-terminus, the 299-residue chain is Acetylglutamate kinase (299 aa).

Substrate-binding positions include 72 to 73 (GG), Arg-94, and Asn-196.

It belongs to the acetylglutamate kinase family. ArgB subfamily.

Its subcellular location is the cytoplasm. The enzyme catalyses N-acetyl-L-glutamate + ATP = N-acetyl-L-glutamyl 5-phosphate + ADP. It functions in the pathway amino-acid biosynthesis; L-arginine biosynthesis; N(2)-acetyl-L-ornithine from L-glutamate: step 2/4. Catalyzes the ATP-dependent phosphorylation of N-acetyl-L-glutamate. This Burkholderia mallei (strain NCTC 10247) protein is Acetylglutamate kinase.